Reading from the N-terminus, the 407-residue chain is MAYQEPNKDGFYGKFGGRFVPETLMTAVLELEKAYRESQADPSFQEELNQLLRQYVGRETPLYYAKNLTQHIGGAKIYLKREDLNHTGAHKINNALGQVWLAKRMGKKKIIAETGAGQHGVATATAAALFNMECIIYMGEEDVKRQALNVFRMELLGAKVEAVTDGSRVLKDAVNAALRSWVANIDDTHYILGSTLGPHPFPEIVRDFQSVIGREAKQQYRDLTGQNLPDALVACVGGGSNAIGLFHPFVEDESVAMYGAEAAGLGVDTEHHAATLTKGRPGVLHGSLMDVLQDAHGQILEAFSISAGLDYPGIGPEHSHYHDIKRASYVPVTDEEALEGFQLLSRVEGIIPALESSHAIAFAVKLAKELGPEKSMIVCLSGRGDKDVVQVKDRLEADAAKKGEAHA.

K91 is subject to N6-(pyridoxal phosphate)lysine.

Belongs to the TrpB family. Tetramer of two alpha and two beta chains. It depends on pyridoxal 5'-phosphate as a cofactor.

It carries out the reaction (1S,2R)-1-C-(indol-3-yl)glycerol 3-phosphate + L-serine = D-glyceraldehyde 3-phosphate + L-tryptophan + H2O. Its pathway is amino-acid biosynthesis; L-tryptophan biosynthesis; L-tryptophan from chorismate: step 5/5. The beta subunit is responsible for the synthesis of L-tryptophan from indole and L-serine. This Streptococcus pneumoniae serotype 2 (strain D39 / NCTC 7466) protein is Tryptophan synthase beta chain.